A 469-amino-acid chain; its full sequence is Keratin, type I cytoskeletal 26 (469 aa).

Residues 1-82 (MSFRLSSGSR…ENEHGLLPGN (82 aa)) are head. Residues 83-118 (EKVTLQNLNDRLASYLDHVCTLEEANADLEQKIKGW) are coil 1A. An IF rod domain is found at 83 to 398 (EKVTLQNLND…KLIDGEGRKS (316 aa)). A linker 1 region spans residues 119-140 (YEKYGPGSGRQLAYDCSKYFSV). The tract at residues 141–232 (TEDLKRQIIS…KNHQEEMKVM (92 aa)) is coil 1B. The linker 12 stretch occupies residues 233–255 (QGAAGGNVNVEINAAPGVDLTVL). Positions 256–394 (LNNMRAEYED…EMYCKLIDGE (139 aa)) are coil 2. The tail stretch occupies residues 395–465 (GRKSKSTYCK…NITMEQRLPS (71 aa)). Disordered stretches follow at residues 398-421 (SKST…KDSK) and 450-469 (KSSK…KVPQ). Positions 405–421 (SEGRGPKNSENQVKDSK) are enriched in basic and acidic residues.

This sequence belongs to the intermediate filament family. As to quaternary structure, heterotetramer of two type I and two type II keratins.

The polypeptide is Keratin, type I cytoskeletal 26 (Bos taurus (Bovine)).